A 264-amino-acid polypeptide reads, in one-letter code: Pyridoxine 5'-phosphate synthase (264 aa).

Residues 1–21 show a composition bias toward polar residues; sequence MTDTAQILPTTLEQNPQNTSK. Residues 1 to 22 are disordered; sequence MTDTAQILPTTLEQNPQNTSKK. Residue N28 coordinates 3-amino-2-oxopropyl phosphate. 30–31 is a binding site for 1-deoxy-D-xylulose 5-phosphate; that stretch reads DH. 3-amino-2-oxopropyl phosphate is bound at residue R39. H64 acts as the Proton acceptor in catalysis. R66 and H71 together coordinate 1-deoxy-D-xylulose 5-phosphate. The active-site Proton acceptor is E91. Residue T121 participates in 1-deoxy-D-xylulose 5-phosphate binding. H217 serves as the catalytic Proton donor. Residues G218 and 239-240 each bind 3-amino-2-oxopropyl phosphate; that span reads GH.

Belongs to the PNP synthase family. In terms of assembly, homooctamer; tetramer of dimers.

The protein localises to the cytoplasm. It catalyses the reaction 3-amino-2-oxopropyl phosphate + 1-deoxy-D-xylulose 5-phosphate = pyridoxine 5'-phosphate + phosphate + 2 H2O + H(+). It functions in the pathway cofactor biosynthesis; pyridoxine 5'-phosphate biosynthesis; pyridoxine 5'-phosphate from D-erythrose 4-phosphate: step 5/5. Catalyzes the complicated ring closure reaction between the two acyclic compounds 1-deoxy-D-xylulose-5-phosphate (DXP) and 3-amino-2-oxopropyl phosphate (1-amino-acetone-3-phosphate or AAP) to form pyridoxine 5'-phosphate (PNP) and inorganic phosphate. In Psychrobacter cryohalolentis (strain ATCC BAA-1226 / DSM 17306 / VKM B-2378 / K5), this protein is Pyridoxine 5'-phosphate synthase.